Here is a 222-residue protein sequence, read N- to C-terminus: Peptide methionine sulfoxide reductase MsrA 2 (222 aa).

Residue Cys56 is part of the active site.

This sequence belongs to the MsrA Met sulfoxide reductase family.

It catalyses the reaction L-methionyl-[protein] + [thioredoxin]-disulfide + H2O = L-methionyl-(S)-S-oxide-[protein] + [thioredoxin]-dithiol. The catalysed reaction is [thioredoxin]-disulfide + L-methionine + H2O = L-methionine (S)-S-oxide + [thioredoxin]-dithiol. Its function is as follows. Has an important function as a repair enzyme for proteins that have been inactivated by oxidation. Catalyzes the reversible oxidation-reduction of methionine sulfoxide in proteins to methionine. In Nostoc sp. (strain PCC 7120 / SAG 25.82 / UTEX 2576), this protein is Peptide methionine sulfoxide reductase MsrA 2 (msrA2).